The chain runs to 172 residues: Stellate protein CG33237 (172 aa).

The protein belongs to the casein kinase 2 subunit beta family. In terms of assembly, interacts in vitro with the casein kinase 2 alpha subunit (CkII-alpha). The relevance of such interaction is however unclear in vivo. As to expression, probably not expressed in wild-type flies. In males lacking the Y chromosome, it is testis-specific and constitutes the main component of star-shaped crystals.

In terms of biological role, unknown. In males lacking the Y chromosome, its strong overexpression leads to the appearance of proteinaceous star-shaped crystals in the primary spermatocytes causing meiotic drive, possibly by interfering with normal casein kinase 2 activity. The polypeptide is Stellate protein CG33237 (Ste:CG33237) (Drosophila melanogaster (Fruit fly)).